We begin with the raw amino-acid sequence, 221 residues long: Glutathione S-transferase (221 aa).

Residues 3–83 enclose the GST N-terminal domain; sequence GKPVLHYANT…YIAGKYNLYG (81 aa). Glutathione-binding positions include Y9, K45, 54-55, and 67-68; these read QV and QT. Residues 85-208 form the GST C-terminal domain; the sequence is DLKERALIDM…QPGSQRKPRL (124 aa).

It belongs to the GST superfamily. Alpha family. Homodimer or heterodimer of GSTA1 and GSTA2.

It catalyses the reaction RX + glutathione = an S-substituted glutathione + a halide anion + H(+). It carries out the reaction prostaglandin A2 + glutathione = prostaglandin A2-S-(R)-glutathione. The catalysed reaction is prostaglandin J2 + glutathione = prostaglandin J2-S-(R)-glutathione. The enzyme catalyses (13S)-hydroperoxy-(9Z,11E)-octadecadienoate + 2 glutathione = (13S)-hydroxy-(9Z,11E)-octadecadienoate + glutathione disulfide + H2O. It catalyses the reaction androst-5-ene-3,17-dione = androst-4-ene-3,17-dione. Functionally, glutathione S-transferase that catalyzes the nucleophilic attack of the sulfur atom of glutathione on the electrophilic groups of a wide range of exogenous and endogenous compounds. Involved in the formation of glutathione conjugates of both prostaglandin A2 (PGA2) and prostaglandin J2 (PGJ2). It also catalyzes the isomerization of D5-androstene-3,17-dione (AD) into D4-androstene-3,17-dione and may therefore play an important role in hormone biosynthesis. Through its glutathione-dependent peroxidase activity toward the fatty acid hydroperoxide (13S)-hydroperoxy-(9Z,11E)-octadecadienoate/13-HPODE it is also involved in the metabolism of oxidized linoleic acid. The polypeptide is Glutathione S-transferase (Gallus gallus (Chicken)).